A 311-amino-acid polypeptide reads, in one-letter code: Methionyl-tRNA formyltransferase (311 aa).

110 to 113 (SLLP) contributes to the (6S)-5,6,7,8-tetrahydrofolate binding site.

It belongs to the Fmt family.

It carries out the reaction L-methionyl-tRNA(fMet) + (6R)-10-formyltetrahydrofolate = N-formyl-L-methionyl-tRNA(fMet) + (6S)-5,6,7,8-tetrahydrofolate + H(+). Its function is as follows. Attaches a formyl group to the free amino group of methionyl-tRNA(fMet). The formyl group appears to play a dual role in the initiator identity of N-formylmethionyl-tRNA by promoting its recognition by IF2 and preventing the misappropriation of this tRNA by the elongation apparatus. This is Methionyl-tRNA formyltransferase from Streptococcus equi subsp. equi (strain 4047).